A 236-amino-acid polypeptide reads, in one-letter code: MPRRAPLRVARGSLDAWLLGGLWVCALGCLCGVGMAAPGAGAGAGGSLGAQRPCQAPQQWEGRQVLYRQSTGRYSRALLSYDGLNQRVRVLDERKALIPCKRLFEYILLYKDGVMFQIEQATKQCSKITLTEPWDPLDIPQNSTFEDQYSIGGPQEQITVQEWSDRKSARSYETWIGIYTVKDCYPVQETVTKNYSVILSTRFFDIQLGIKDPSVFIPPSTCQTAQPERMSEECSW.

The N-terminal stretch at 1–35 is a signal peptide; it reads MPRRAPLRVARGSLDAWLLGGLWVCALGCLCGVGM. Intrachain disulfides connect Cys-54–Cys-184, Cys-100–Cys-234, and Cys-125–Cys-222. N-linked (GlcNAc...) asparagine glycosylation is found at Asn-142 and Asn-194.

This sequence belongs to the ependymin family. Homodimer. Post-translationally, N-glycosylated; the glycan contains mannose-6-phosphate moieties.

The protein resides in the lysosome lumen. The protein localises to the secreted. Binds anionic lipids and gangliosides at acidic pH. The chain is Mammalian ependymin-related protein 1 (EPDR1) from Bos taurus (Bovine).